Here is a 156-residue protein sequence, read N- to C-terminus: Small ribosomal subunit protein uS7 (156 aa).

It belongs to the universal ribosomal protein uS7 family. Part of the 30S ribosomal subunit. Contacts proteins S9 and S11.

Its function is as follows. One of the primary rRNA binding proteins, it binds directly to 16S rRNA where it nucleates assembly of the head domain of the 30S subunit. Is located at the subunit interface close to the decoding center, probably blocks exit of the E-site tRNA. This chain is Small ribosomal subunit protein uS7, found in Prochlorococcus marinus (strain MIT 9301).